Consider the following 195-residue polypeptide: Cysteine/O-acetylserine efflux protein (195 aa).

The Periplasmic portion of the chain corresponds to 1-7 (MTPTLLS). The helical transmembrane segment at 8–28 (AFWTYTLITAMTPGPNNILAL) threads the bilayer. Topologically, residues 29 to 46 (SSATSHGFRQSTRVLAGM) are cytoplasmic. The chain crosses the membrane as a helical span at residues 47–67 (SLGFLIVMLLCAGISFSLAVI). Over 68 to 69 (DP) the chain is Periplasmic. Residues 70–90 (AAVHLLSWAGAAYIVWLAWKI) traverse the membrane as a helical segment. The Cytoplasmic segment spans residues 91-104 (ATSPTKEDGLQAKP). Residues 105–125 (ISFWASFALQFVNVKIILYGV) form a helical membrane-spanning segment. At 126–141 (TALSTFVLPQTQALSW) the chain is on the periplasmic side. A helical transmembrane segment spans residues 142 to 162 (VVGVSVLLAMIGTFGNVCWAL). The Cytoplasmic portion of the chain corresponds to 163 to 176 (AGHLFQRLFRQYGR). A helical transmembrane segment spans residues 177–194 (QLNIVLALLLIYCAVRIF). A topological domain (periplasmic) is located at residue tyrosine 195.

It belongs to the Rht family.

The protein localises to the cell inner membrane. It carries out the reaction O-acetyl-L-serine(in) = O-acetyl-L-serine(out). The enzyme catalyses L-cysteine(in) = L-cysteine(out). Functionally, exporter of O-acetylserine (OAS) and cysteine. In Escherichia coli O139:H28 (strain E24377A / ETEC), this protein is Cysteine/O-acetylserine efflux protein (eamB).